We begin with the raw amino-acid sequence, 353 residues long: O-antigen biosynthesis glycosyltransferase WclY (353 aa).

The helical transmembrane segment at 116 to 136 threads the bilayer; that stretch reads SLIGGLLWCSIWLFFDKLVIL. UDP contacts are provided by asparagine 190 and glutamate 271. Positions 263–271 match the E(x7)E motif; that stretch reads EGFGLTVLE.

It belongs to the glycosyltransferase group 1 family. Glycosyltransferase 4 subfamily.

Its subcellular location is the membrane. The protein operates within bacterial outer membrane biogenesis; LPS O-antigen biosynthesis. Its activity is regulated as follows. Activated by 5mM MnCl(2) and MgCl(2). No significant effect on activity by 5 mM ethylenediaminetetraacetic acid (EDTA), 0.125-0.5% Triton X-100 or dithiothreitol (DTT). Inhibited by 5 mM Zn-acetate. In terms of biological role, involved in the assembly of the O-repeating unit during O-antigen biosynthesis. Glucosyltransferase accountable for the alpha-D-Glc-1,4-beta-D-Gal linkage within the O-antigen. Transfers alpha-1,4-Glc to the Gal moiety of a specific Gal-beta1-3GalNAc-alpha-OPO3-PO3-phenoxyundecyl (Gal-beta1-3GalNAc-PP-PhU) synthetic natural acceptor substrate analog. Requires both Gal-beta1-3GalNAc-alpha and the diphosphate moiety in the acceptor. Not active with GalNAc-PP-PhU, GlcNAc-PP-PhU, Gal-beta1-3GalNAc-alpha-O-benzyl, D-Rha-alpha1-3GlcNAc-alpha-PP-PhU or D-Man-alpha1-3Man-alpha-5-benzamidopentyl (BAP), nor with glycopeptides TTTVTP (Gal-beta1-3GalNAc-alpha-)TPTG or TT (Gal-beta1-3GalNAc-alpha-)TVTPTPTG as acceptor substrates. Has a broad nucleotide sugar donor substrate specificity with ADP-Glc, TDP-Glc and UDP-Glc as superior donors. Gal, GlcNAc, and GalNAc residues are transferred from UDP-sugars, but with low activity. UDP-Xyl, UDP-GlcA, GDP-Fuc or GDP-K-Rha do not act as donors. This is O-antigen biosynthesis glycosyltransferase WclY from Escherichia coli.